The sequence spans 311 residues: p-hydroxybenzoic acid efflux pump subunit AaeA (311 aa).

A helical membrane pass occupies residues 11–31 (VGITVLVVVLAVIAIFNVWAF).

It belongs to the membrane fusion protein (MFP) (TC 8.A.1) family.

It is found in the cell inner membrane. Functionally, forms an efflux pump with AaeB. This chain is p-hydroxybenzoic acid efflux pump subunit AaeA, found in Yersinia pseudotuberculosis serotype O:1b (strain IP 31758).